A 617-amino-acid chain; its full sequence is Cell pattern formation-associated protein STUA (617 aa).

Positions 1-79 are disordered; the sequence is MNQPAADMYY…PASQMGQNVL (79 aa). A compositionally biased stretch (polar residues) spans 24-34; the sequence is TVTSGAMSYHS. Low complexity predominate over residues 45 to 58; it reads PQYAPQPQYSQYGY. The span at 61-76 shows a compositional bias: polar residues; it reads GLTSPQSAQPASQMGQ. An HTH APSES-type domain is found at 106-212; sequence RVTATLWEDE…HNIGALLYHP (107 aa). The segment at residues 140-161 is a DNA-binding region (H-T-H motif); the sequence is GTKLLNVAGMTRGRRDGILKSE. 3 disordered regions span residues 223–274, 300–451, and 463–617; these read AAAE…MGRP, SDSG…DSGA, and APAV…PRRR. Low complexity-rich tracts occupy residues 305-318 and 334-345; these read QWAQ…AQGA and PATPASTPPGTT. Polar residues-rich tracts occupy residues 346 to 361 and 368 to 382; these read IQNM…QYDN and PSAQ…NPAS. Basic and acidic residues predominate over residues 438-447; the sequence is EHDHDAEYTH. Residues 488-509 show a composition bias toward low complexity; it reads PASGRATPRTAAAPQPYYSQQA. 2 stretches are compositionally biased toward polar residues: residues 519 to 533 and 553 to 563; these read QQPS…SNDR and SMSNGYASQMN. The nuclear localization domain stretch occupies residues 569-593; it reads KRGRDEDDDLQRPSSGGGMDLKRRK. Over residues 599 to 617 the composition is skewed to low complexity; it reads QVPAMAYAPPVMAQQPRRR.

The protein belongs to the EFG1/PHD1/stuA family.

The protein localises to the nucleus. In terms of biological role, transcription factor that regulates asexual reproduction. Binds the StuA-response elements (StRE) with the consensus sequence 5'-(A/T)CGCG(T/A)N(A/C)-3' at the promoters of target genes. Required for the formation of aerial hyphae, efficient conidiation, and the formation of perithecia. Essential for the generation of normal turgor pressure within the appressorium. Required for infection of intact apple fruit and penetration of onion epidermal cells. This is Cell pattern formation-associated protein STUA from Colletotrichum gloeosporioides (Anthracnose fungus).